The primary structure comprises 415 residues: Phosphoglycerate kinase (415 aa).

Residues 27-29, R44, 67-70, R124, and R164 each bind substrate; these read DIN and HQGR. ATP is bound by residues E336 and 362–365; that span reads GGHM.

This sequence belongs to the phosphoglycerate kinase family. Monomer.

Its subcellular location is the cytoplasm. The catalysed reaction is (2R)-3-phosphoglycerate + ATP = (2R)-3-phospho-glyceroyl phosphate + ADP. It functions in the pathway carbohydrate degradation; glycolysis; pyruvate from D-glyceraldehyde 3-phosphate: step 2/5. This chain is Phosphoglycerate kinase, found in Sulfurisphaera tokodaii (strain DSM 16993 / JCM 10545 / NBRC 100140 / 7) (Sulfolobus tokodaii).